Consider the following 343-residue polypeptide: Pyridoxal 5'-phosphate synthase subunit PDX1 (343 aa).

Asp-73 contacts D-ribose 5-phosphate. The active-site Schiff-base intermediate with D-ribose 5-phosphate is Lys-130. D-ribose 5-phosphate is bound at residue Gly-202. Gln-214 serves as a coordination point for D-glyceraldehyde 3-phosphate. D-ribose 5-phosphate is bound by residues Gly-263 and 284–285 (GS).

The protein belongs to the PdxS/SNZ family.

It carries out the reaction aldehydo-D-ribose 5-phosphate + D-glyceraldehyde 3-phosphate + L-glutamine = pyridoxal 5'-phosphate + L-glutamate + phosphate + 3 H2O + H(+). The protein operates within cofactor biosynthesis; pyridoxal 5'-phosphate biosynthesis. Its function is as follows. Catalyzes the formation of pyridoxal 5'-phosphate from ribose 5-phosphate (RBP), glyceraldehyde 3-phosphate (G3P) and ammonia. The ammonia is provided by PDX2. Can also use ribulose 5-phosphate and dihydroxyacetone phosphate as substrates, resulting from enzyme-catalyzed isomerization of RBP and G3P, respectively. Also plays an indirect role in resistance to singlet oxygen-generating photosensitizers. This Cercospora nicotianae (Barn spot disease fungus) protein is Pyridoxal 5'-phosphate synthase subunit PDX1 (PDX1).